Consider the following 454-residue polypeptide: 3-phosphoshikimate 1-carboxyvinyltransferase (454 aa).

3-phosphoshikimate-binding residues include Lys39, Ser40, and Arg44. Residue Lys39 participates in phosphoenolpyruvate binding. Residues Gly112 and Arg140 each coordinate phosphoenolpyruvate. 3-phosphoshikimate contacts are provided by Ser185, Gln187, Asp333, and Lys360. Gln187 serves as a coordination point for phosphoenolpyruvate. The active-site Proton acceptor is Asp333. Phosphoenolpyruvate is bound by residues Arg364 and Arg405.

Belongs to the EPSP synthase family. As to quaternary structure, monomer.

It localises to the cytoplasm. It carries out the reaction 3-phosphoshikimate + phosphoenolpyruvate = 5-O-(1-carboxyvinyl)-3-phosphoshikimate + phosphate. It functions in the pathway metabolic intermediate biosynthesis; chorismate biosynthesis; chorismate from D-erythrose 4-phosphate and phosphoenolpyruvate: step 6/7. Functionally, catalyzes the transfer of the enolpyruvyl moiety of phosphoenolpyruvate (PEP) to the 5-hydroxyl of shikimate-3-phosphate (S3P) to produce enolpyruvyl shikimate-3-phosphate and inorganic phosphate. In Xylella fastidiosa (strain Temecula1 / ATCC 700964), this protein is 3-phosphoshikimate 1-carboxyvinyltransferase.